A 429-amino-acid chain; its full sequence is Serine--tRNA ligase (429 aa).

Residue 235 to 237 (TAE) participates in L-serine binding. 266–268 (RSE) provides a ligand contact to ATP. L-serine is bound at residue Glu-289. An ATP-binding site is contributed by 353-356 (EISS). Position 389 (Ser-389) interacts with L-serine.

The protein belongs to the class-II aminoacyl-tRNA synthetase family. Type-1 seryl-tRNA synthetase subfamily. As to quaternary structure, homodimer. The tRNA molecule binds across the dimer.

It is found in the cytoplasm. It carries out the reaction tRNA(Ser) + L-serine + ATP = L-seryl-tRNA(Ser) + AMP + diphosphate + H(+). It catalyses the reaction tRNA(Sec) + L-serine + ATP = L-seryl-tRNA(Sec) + AMP + diphosphate + H(+). Its pathway is aminoacyl-tRNA biosynthesis; selenocysteinyl-tRNA(Sec) biosynthesis; L-seryl-tRNA(Sec) from L-serine and tRNA(Sec): step 1/1. Catalyzes the attachment of serine to tRNA(Ser). Is also able to aminoacylate tRNA(Sec) with serine, to form the misacylated tRNA L-seryl-tRNA(Sec), which will be further converted into selenocysteinyl-tRNA(Sec). This Actinobacillus succinogenes (strain ATCC 55618 / DSM 22257 / CCUG 43843 / 130Z) protein is Serine--tRNA ligase.